The chain runs to 402 residues: B3 domain-containing protein LFL1 (402 aa).

Positions 1-174 (MRGEERWQEQ…AAPRPSSHHT (174 aa)) are disordered. The segment covering 74–87 (ARPPTLAASAAAAS) has biased composition (low complexity). A compositionally biased stretch (pro residues) spans 88-102 (SPPPPPPPPIPPLPP). Low complexity-rich tracts occupy residues 103–139 (STSTSAARPTDMAGVTSKRRSSSASTSSSSGDGAAVS) and 156–169 (PRPAASLRPAAPRP). Residues 181 to 284 (LQKELRYSDV…RFVIGAKKAG (104 aa)) constitute a DNA-binding region (TF-B3). The segment at 381–402 (LHVTDDKSGHSLIPNPKSGPHM) is disordered.

Expressed in anthers, pollen grains and young developing embryos.

Its subcellular location is the nucleus. Its function is as follows. Transcription repressor involved in flowering time regulation. Represses the flowering activator EHD1 by binding specifically to the DNA sequence 5'-CATGCATG-3 of its promoter. The polypeptide is B3 domain-containing protein LFL1 (LFL1) (Oryza sativa subsp. japonica (Rice)).